Here is a 275-residue protein sequence, read N- to C-terminus: MQAVQQEIAQALKVQPPFANAAALEAEVARRVAFIKDCLANARLKTLVLGISGGVDSLTAALLAQRAINELRAETGDKAYTFIAVRLPYQVQHDEHDAQACLDVIKADEVHTVDIAPAVRALAAEVAALKNGSPTLVDFVVGNVKARTRMVAQYTIAGARAGLVIGTDHAAEAVMGFFTKFGDGACDLAPLSGLVKNQVRAIARSFGAPESLVEKVPTADLEDLEPGKPDEASHGVTYAQIDAFLHGQPVDQAAFDIIVATYRKTQHKRELPFAP.

An ATP-binding site is contributed by 50–57; sequence GISGGVDS. Aspartate 56 serves as a coordination point for Mg(2+). Deamido-NAD(+) is bound at residue arginine 147. Position 167 (threonine 167) interacts with ATP. Glutamate 172 provides a ligand contact to Mg(2+). The deamido-NAD(+) site is built by lysine 180 and aspartate 187. The ATP site is built by lysine 196 and threonine 218. 267–268 contributes to the deamido-NAD(+) binding site; sequence HK.

This sequence belongs to the NAD synthetase family. As to quaternary structure, homodimer.

The enzyme catalyses deamido-NAD(+) + NH4(+) + ATP = AMP + diphosphate + NAD(+) + H(+). It functions in the pathway cofactor biosynthesis; NAD(+) biosynthesis; NAD(+) from deamido-NAD(+) (ammonia route): step 1/1. Its function is as follows. Catalyzes the ATP-dependent amidation of deamido-NAD to form NAD. Uses ammonia as a nitrogen source. The protein is NH(3)-dependent NAD(+) synthetase of Pseudomonas putida (strain ATCC 700007 / DSM 6899 / JCM 31910 / BCRC 17059 / LMG 24140 / F1).